Consider the following 79-residue polypeptide: Large ribosomal subunit protein bL28 (79 aa).

Belongs to the bacterial ribosomal protein bL28 family.

The chain is Large ribosomal subunit protein bL28 from Porphyromonas gingivalis (strain ATCC 33277 / DSM 20709 / CIP 103683 / JCM 12257 / NCTC 11834 / 2561).